A 91-amino-acid polypeptide reads, in one-letter code: uncharacterized protein (91 aa).

This is an uncharacterized protein from Rickettsia conorii (strain ATCC VR-613 / Malish 7).